Consider the following 751-residue polypeptide: Diamine oxidase [copper-containing] (751 aa).

An N-terminal signal peptide occupies residues 1–19; it reads MPALGWAVAAILMLQTAMA. N-linked (GlcNAc...) asparagine glycosylation is found at Asn-110 and Asn-168. Cys-177 and Cys-181 form a disulfide bridge. Asp-373 serves as the catalytic Proton acceptor. Cys-391 and Cys-417 form a disulfide bridge. Residue Tyr-461 is the Schiff-base intermediate with substrate; via topaquinone of the active site. The residue at position 461 (Tyr-461) is a 2',4',5'-topaquinone. Cu(2+)-binding residues include His-510 and His-512. 3 residues coordinate Ca(2+): Asp-519, Leu-520, and Asp-521. An N-linked (GlcNAc...) asparagine glycan is attached at Asn-538. 6 residues coordinate Ca(2+): Glu-562, Phe-653, Asn-656, Glu-658, Asp-664, and Leu-665. His-675 serves as a coordination point for Cu(2+). Asn-745 is a glycosylation site (N-linked (GlcNAc...) asparagine).

The protein belongs to the copper/topaquinone oxidase family. In terms of assembly, homodimer; disulfide-linked. Requires Cu(2+) as cofactor. The cofactor is Ca(2+). It depends on L-topaquinone as a cofactor. Post-translationally, N-glycosylated. Topaquinone (TPQ) is generated by copper-dependent autoxidation of a specific tyrosyl residue. In terms of tissue distribution, widely expressed with higher expression in placenta and kidney.

The protein localises to the secreted. It localises to the extracellular space. The protein resides in the cell membrane. It carries out the reaction histamine + O2 + H2O = imidazole-4-acetaldehyde + H2O2 + NH4(+). The enzyme catalyses N(tau)-methylhistamine + O2 + H2O = 1-methylimidazole-4-acetaldehyde + H2O2 + NH4(+). It catalyses the reaction putrescine + O2 + H2O = 4-aminobutanal + H2O2 + NH4(+). The catalysed reaction is cadaverine + O2 + H2O = 5-aminopentanal + H2O2 + NH4(+). With respect to regulation, inhibited by amiloride and amiloride analogs. Inhibited by isoniazid, cimetidine, clonidine, berenil and pentamidine. Functionally, catalyzes the oxidative deamination of primary amines to the corresponding aldehydes with the concomitant production of hydrogen peroxide and ammonia. Its preferred substrates are the diamines histamine and 1-methylhistamine and it could therefore play a role in allergic and immune responses. Has a broad specificity for diamines and can also act on cadaverine and putrescine, two products of amino acid catabolism. It could also act on polyamines, like spermidine and spermine though less efficiently, and regulate various biological processes. The sequence is that of Diamine oxidase [copper-containing] from Homo sapiens (Human).